The following is a 913-amino-acid chain: Protein SEY1 homolog (913 aa).

Topologically, residues 1-825 (MTDVNKTQII…ETGGHMSLKN (825 aa)) are cytoplasmic. The region spanning 33–288 (GFNYNVIAIL…IPADGFAQYC (256 aa)) is the GB1/RHD3-type G domain. 43–50 (GSQSSGKS) is a GTP binding site. Residues 826–846 (VPFAFWVILLILGWNEILMFT) form a helical membrane-spanning segment. The Lumenal segment spans residues 847 to 849 (RLF). The chain crosses the membrane as a helical span at residues 850–870 (FRLNIILPMLIGFIIIVISCL). The Cytoplasmic portion of the chain corresponds to 871–913 (YTGNAQILSYINKIIFIVIKNLYNFYKHLQTIGHQTTKPEKVE).

The protein belongs to the TRAFAC class dynamin-like GTPase superfamily. GB1/RHD3 GTPase family. RHD3 subfamily.

The protein resides in the endoplasmic reticulum membrane. In terms of biological role, probable GTP-binding protein involved in generating and maintaining the structure of the tubular endoplasmic reticulum network. The sequence is that of Protein SEY1 homolog from Plasmodium berghei (strain Anka).